We begin with the raw amino-acid sequence, 208 residues long: Inactive ribonuclease-like protein 10 (208 aa).

An N-terminal signal peptide occupies residues 1-24 (MKVTLVHLLFMMLLLLLGLGLGLG). Asparagine 125 and asparagine 147 each carry an N-linked (GlcNAc...) asparagine glycan.

The protein belongs to the pancreatic ribonuclease family. In terms of processing, the N-terminus is blocked. Glycosylated. As to expression, male-specific expression in proximal caput of the epididymis (at protein level).

The protein resides in the secreted. In terms of biological role, secreted proximal epididymal protein required for post-testicular sperm maturation and male fertility. May be involved in sperm adhesion to the egg zona pellucida. Does not have ribonuclease activity. This chain is Inactive ribonuclease-like protein 10 (Rnase10), found in Mus musculus (Mouse).